A 1017-amino-acid polypeptide reads, in one-letter code: Probable disease resistance protein RDL5 (1017 aa).

Residues 25–52 adopt a coiled-coil conformation; the sequence is QGVEDQVTELKRDLNMLSSFLKDANAKK. The region spanning 147-460 is the NB-ARC domain; it reads KQREMRQKFS…AEGIFQPRHY (314 aa). 190-197 contacts ATP; that stretch reads GMGGLGKT. 7 LRR repeats span residues 602 to 627, 649 to 674, 675 to 699, 768 to 791, 792 to 819, 841 to 865, and 937 to 962; these read LIHL…NLKL, MQEL…NLVK, LETL…RLST, PSHL…ILEK, LLQL…GFPQ, MPLL…HLPS, and MPFL…QFIY.

The protein belongs to the disease resistance NB-LRR family.

Its function is as follows. Potential disease resistance protein. The protein is Probable disease resistance protein RDL5 (RDL5) of Arabidopsis thaliana (Mouse-ear cress).